Consider the following 391-residue polypeptide: UPF0328 protein ECU06_1650 (391 aa).

It belongs to the UPF0328 family.

The chain is UPF0328 protein ECU06_1650 from Encephalitozoon cuniculi (strain GB-M1) (Microsporidian parasite).